The following is a 358-amino-acid chain: Aminomethyltransferase (358 aa).

This sequence belongs to the GcvT family. In terms of assembly, the glycine cleavage system is composed of four proteins: P, T, L and H.

The catalysed reaction is N(6)-[(R)-S(8)-aminomethyldihydrolipoyl]-L-lysyl-[protein] + (6S)-5,6,7,8-tetrahydrofolate = N(6)-[(R)-dihydrolipoyl]-L-lysyl-[protein] + (6R)-5,10-methylene-5,6,7,8-tetrahydrofolate + NH4(+). In terms of biological role, the glycine cleavage system catalyzes the degradation of glycine. The sequence is that of Aminomethyltransferase from Francisella tularensis subsp. tularensis (strain WY96-3418).